The following is a 145-amino-acid chain: Major pollen allergen Ole e 1 (145 aa).

Intrachain disulfides connect Cys19/Cys90, Cys22/Cys131, and Cys43/Cys78. Asn111 carries an N-linked (GlcNAc...) (complex) asparagine; alternate glycan. Asn111 carries an N-linked (GlcNAc...) (high mannose) asparagine; alternate glycan.

The protein belongs to the Ole e I family. Post-translationally, N-glycosylated; contains high mannose (Man(7)-GlcNAc) and partially fucosylated complex glycans (GlcNAc-Man(3)-Xyl-GlcNAc). Complex glycans may contribute to the antigenicity. Exists both in a glycosylated and in a non-glycosylated form. Ole e 1 and Ole e 1.0103 are the only non-glycosylated isoallergens. In terms of processing, a second potential glycosylation site exists at position 50 in cv. Bella de Espana and cv. Hojiblanca. As to expression, expressed in tapetum and pollen grains. Not detected in petals, roots or leaves.

The protein localises to the endoplasmic reticulum. It is found in the secreted. In terms of biological role, may be involved in recognition between pollen-stigma and pollen tube-style cells. This Olea europaea (Common olive) protein is Major pollen allergen Ole e 1.